A 111-amino-acid polypeptide reads, in one-letter code: Cryptic phage CTXphi transcriptional repressor RstR (111 aa).

The HTH cro/C1-type domain maps to Ile-6 to Leu-60. A DNA-binding region (H-T-H motif) is located at residues Gln-17–Lys-36.

Functionally, transcriptional repressor of the integrated CTXPhi phage gene rstA2. The chain is Cryptic phage CTXphi transcriptional repressor RstR (rstR) from Vibrio cholerae.